The primary structure comprises 528 residues: Probable rhamnogalacturonate lyase A (528 aa).

Positions 1–20 (MFFQTGLLLSLSLWTKVAYA) are cleaved as a signal peptide. 2 disulfide bridges follow: C50/C93 and C184/C193. Residue N56 is glycosylated (N-linked (GlcNAc...) asparagine). N351 carries an N-linked (GlcNAc...) asparagine glycan.

This sequence belongs to the polysaccharide lyase 4 family.

It localises to the secreted. The catalysed reaction is Endotype eliminative cleavage of L-alpha-rhamnopyranosyl-(1-&gt;4)-alpha-D-galactopyranosyluronic acid bonds of rhamnogalacturonan I domains in ramified hairy regions of pectin leaving L-rhamnopyranose at the reducing end and 4-deoxy-4,5-unsaturated D-galactopyranosyluronic acid at the non-reducing end.. Its function is as follows. Pectinolytic enzymes consist of four classes of enzymes: pectin lyase, polygalacturonase, pectin methylesterase and rhamnogalacturonase. Degrades the rhamnogalacturonan I (RG-I) backbone of pectin. Active against linseed rhamnogalacturonan. This is Probable rhamnogalacturonate lyase A (rglA) from Aspergillus clavatus (strain ATCC 1007 / CBS 513.65 / DSM 816 / NCTC 3887 / NRRL 1 / QM 1276 / 107).